A 590-amino-acid chain; its full sequence is Protein NRT1/ PTR FAMILY 8.5 (590 aa).

A helical transmembrane segment spans residues Ala-96–Ile-116. Thr-126 is subject to Phosphothreonine. 10 consecutive transmembrane segments (helical) span residues Phe-130–Leu-150, Thr-168–Ile-188, Phe-214–Val-234, Trp-242–Ile-262, Phe-365–Phe-385, Ile-401–Tyr-421, Met-445–Val-465, Ile-478–Gly-498, Ala-524–Gly-544, and Phe-562–Val-582.

It belongs to the major facilitator superfamily. Proton-dependent oligopeptide transporter (POT/PTR) (TC 2.A.17) family. In terms of tissue distribution, expressed in shoots, roots, stems, leaves, flowers and siliques.

It is found in the membrane. The protein is Protein NRT1/ PTR FAMILY 8.5 (NPF8.5) of Arabidopsis thaliana (Mouse-ear cress).